The chain runs to 142 residues: Type II secretion system core protein G (142 aa).

Positions 1–8 (MQRRQQSG) are cleaved as a propeptide — leader sequence. N-methylphenylalanine is present on F9. Residues 9–29 (FTLIEIMVVVVILGILAALVV) traverse the membrane as a helical segment. The disordered stretch occupies residues 121–142 (SLGADGKEGGSDNDADIGNWDN).

This sequence belongs to the GSP G family. Type II secretion system is composed of four main components: the outer membrane complex, the inner membrane complex, the cytoplasmic secretion ATPase and the periplasm-spanning pseudopilus. Forms homomultimers. Interacts with pseudopilin tip ternary complex made of XcpX, XcpU, XcpV and XcpW. Interacts with PilA. In terms of processing, cleaved by the prepilin peptidase. Post-translationally, methylated by prepilin peptidase at the amino group of the N-terminal phenylalanine once the leader sequence is cleaved.

It is found in the cell inner membrane. Core component of the type II secretion system required for the energy-dependent secretion of extracellular factors such as proteases and toxins from the periplasm. Pseudopilin (pilin-like) protein that polymerizes to form the pseudopilus. Further polymerization triggers pseudopilus growth. Type II pseudopilus confers increased bacterial adhesive capabilities. The chain is Type II secretion system core protein G (xcpT) from Pseudomonas aeruginosa (strain ATCC 15692 / DSM 22644 / CIP 104116 / JCM 14847 / LMG 12228 / 1C / PRS 101 / PAO1).